The chain runs to 58 residues: Small ribosomal subunit protein bS21C (58 aa).

Residues 38–58 (YEKPSLRRKRKAEAARKGGRY) are disordered. Over residues 49–58 (AEAARKGGRY) the composition is skewed to basic and acidic residues.

The protein belongs to the bacterial ribosomal protein bS21 family.

The chain is Small ribosomal subunit protein bS21C (rpsU3) from Nostoc sp. (strain PCC 7120 / SAG 25.82 / UTEX 2576).